The following is a 420-amino-acid chain: Acetyl-CoA acetyltransferase A, mitochondrial (420 aa).

The transit peptide at 1-33 (MAFCGTRTAARLSHSTRALHNTHRNFASQRTLN) directs the protein to the mitochondrion. Cys-119 functions as the Acyl-thioester intermediate in the catalytic mechanism. CoA contacts are provided by residues Tyr-212, 251-253 (RVD), and Lys-256. Tyr-212 is a binding site for K(+). Ala-273 and Ala-274 together coordinate K(+). Ser-277 is a CoA binding site. Val-374 contributes to the K(+) binding site. The active-site Proton donor/acceptor is the Cys-406.

Belongs to the thiolase-like superfamily. Thiolase family. Homotetramer.

It localises to the mitochondrion. It catalyses the reaction 2 acetyl-CoA = acetoacetyl-CoA + CoA. It carries out the reaction propanoyl-CoA + acetyl-CoA = 2-methyl-3-oxobutanoyl-CoA + CoA. It functions in the pathway lipid metabolism; fatty acid beta-oxidation. Functionally, this is one of the enzymes that catalyzes the last step of the mitochondrial beta-oxidation pathway, an aerobic process breaking down fatty acids into acetyl-CoA. Using free coenzyme A/CoA, catalyzes the thiolytic cleavage of medium- to long-chain 3-oxoacyl-CoAs into acetyl-CoA and a fatty acyl-CoA shortened by two carbon atoms. The activity of the enzyme is reversible and it can also catalyze the condensation of two acetyl-CoA molecules into acetoacetyl-CoA. Thereby, it plays a major role in ketone body metabolism. This chain is Acetyl-CoA acetyltransferase A, mitochondrial (acat1-a), found in Xenopus laevis (African clawed frog).